We begin with the raw amino-acid sequence, 1085 residues long: Kinesin-like protein cut7 (1085 aa).

Residues 1-70 (MAPRVAPGGS…TDHALHDENE (70 aa)) form a disordered region. Residues 24 to 37 (PVSTPNSHFRSASN) show a composition bias toward polar residues. The region spanning 72 to 421 (NINVVVRVRG…LEYAARAKSI (350 aa)) is the Kinesin motor domain. An ATP-binding site is contributed by 159–166 (GQTGTGKT). Coiled coils occupy residues 436–604 (LIKD…WNLK), 715–740 (ISSELIELQKDMKESYRQLVQELRSL), and 897–955 (LALA…DSIK). 2 repeats span residues 987 to 998 (DESLCNLETTIE) and 999 to 1010 (DTSLVKLETTGD). Thr1011 is modified (phosphothreonine; by CDC2). The interval 1049 to 1085 (YTSSNQTNEPDVYDKPSNSSRTSLLRSSRSAYSKMKR) is disordered. A compositionally biased stretch (low complexity) spans 1065 to 1078 (SNSSRTSLLRSSRS).

This sequence belongs to the TRAFAC class myosin-kinesin ATPase superfamily. Kinesin family. BimC subfamily.

The protein localises to the cytoplasm. It localises to the cytoskeleton. Its subcellular location is the microtubule organizing center. It is found in the spindle pole body. Its function is as follows. Could be a spindle pole body motor. On transition from G2 to M phase of the cell cycle, the spindle pole body duplicates; the daughter pole bodies seed microtubules which interdigitate to form a short spindle that elongates to span the nucleus at metaphase. Mutations at cut7 block spindle formation. This is Kinesin-like protein cut7 (cut7) from Schizosaccharomyces pombe (strain 972 / ATCC 24843) (Fission yeast).